A 106-amino-acid polypeptide reads, in one-letter code: NADH-quinone oxidoreductase subunit K (106 aa).

The next 3 helical transmembrane spans lie at isoleucine 10 to valine 30, valine 35 to phenylalanine 55, and valine 67 to isoleucine 87.

Belongs to the complex I subunit 4L family. In terms of assembly, NDH-1 is composed of 14 different subunits. Subunits NuoA, H, J, K, L, M, N constitute the membrane sector of the complex.

The protein resides in the cell inner membrane. The enzyme catalyses a quinone + NADH + 5 H(+)(in) = a quinol + NAD(+) + 4 H(+)(out). NDH-1 shuttles electrons from NADH, via FMN and iron-sulfur (Fe-S) centers, to quinones in the respiratory chain. The immediate electron acceptor for the enzyme in this species is believed to be ubiquinone. Couples the redox reaction to proton translocation (for every two electrons transferred, four hydrogen ions are translocated across the cytoplasmic membrane), and thus conserves the redox energy in a proton gradient. The protein is NADH-quinone oxidoreductase subunit K of Leptospira borgpetersenii serovar Hardjo-bovis (strain JB197).